Consider the following 220-residue polypeptide: Protein-L-isoaspartate O-methyltransferase (220 aa).

Serine 64 is a catalytic residue.

This sequence belongs to the methyltransferase superfamily. L-isoaspartyl/D-aspartyl protein methyltransferase family.

It localises to the cytoplasm. The catalysed reaction is [protein]-L-isoaspartate + S-adenosyl-L-methionine = [protein]-L-isoaspartate alpha-methyl ester + S-adenosyl-L-homocysteine. Catalyzes the methyl esterification of L-isoaspartyl residues in peptides and proteins that result from spontaneous decomposition of normal L-aspartyl and L-asparaginyl residues. It plays a role in the repair and/or degradation of damaged proteins. This is Protein-L-isoaspartate O-methyltransferase from Thermococcus onnurineus (strain NA1).